The primary structure comprises 130 residues: Protein ApaG (130 aa).

The ApaG domain maps to 3–127 (RALTRDIEVT…FSLDTPDLRR (125 aa)).

The chain is Protein ApaG from Allorhizobium ampelinum (strain ATCC BAA-846 / DSM 112012 / S4) (Agrobacterium vitis (strain S4)).